The sequence spans 148 residues: Sperm-specific protein PHI-2B (148 aa).

Over residues 1–35 the composition is skewed to basic residues; that stretch reads PSPSRRSRSRSRSRSKSPKRSPAKKARKTPKKRRA. Disordered stretches follow at residues 1–44 and 97–148; these read PSPS…KPST and GVLV…KSNN. The region spanning 40–119 is the H15 domain; the sequence is KKPSTLSMIV…GATGSFRVGK (80 aa). The span at 124–148 shows a compositional bias: basic residues; that stretch reads PKKKAKKAKSPKKKSSKKSSNKSNN.

The protein belongs to the histone H1/H5 family. As to expression, sperm.

The protein resides in the nucleus. It is found in the chromosome. Linker histones are implicated in chromatin remodeling and/or transcriptional regulation during spermiogenesis, the process of spermatid maturation into spermatozoa. In Mytilus californianus (California mussel), this protein is Sperm-specific protein PHI-2B.